The sequence spans 346 residues: Holliday junction branch migration complex subunit RuvB (346 aa).

The tract at residues M1–Y182 is large ATPase domain (RuvB-L). ATP-binding positions include I21, R22, G63, K66, T67, T68, E129–F131, R172, Y182, and R219. A Mg(2+)-binding site is contributed by T67. A small ATPAse domain (RuvB-S) region spans residues S183–D253. Residues E256–S346 form a head domain (RuvB-H) region. DNA contacts are provided by R311 and R316.

The protein belongs to the RuvB family. As to quaternary structure, homohexamer. Forms an RuvA(8)-RuvB(12)-Holliday junction (HJ) complex. HJ DNA is sandwiched between 2 RuvA tetramers; dsDNA enters through RuvA and exits via RuvB. An RuvB hexamer assembles on each DNA strand where it exits the tetramer. Each RuvB hexamer is contacted by two RuvA subunits (via domain III) on 2 adjacent RuvB subunits; this complex drives branch migration. In the full resolvosome a probable DNA-RuvA(4)-RuvB(12)-RuvC(2) complex forms which resolves the HJ.

It localises to the cytoplasm. The catalysed reaction is ATP + H2O = ADP + phosphate + H(+). Functionally, the RuvA-RuvB-RuvC complex processes Holliday junction (HJ) DNA during genetic recombination and DNA repair, while the RuvA-RuvB complex plays an important role in the rescue of blocked DNA replication forks via replication fork reversal (RFR). RuvA specifically binds to HJ cruciform DNA, conferring on it an open structure. The RuvB hexamer acts as an ATP-dependent pump, pulling dsDNA into and through the RuvAB complex. RuvB forms 2 homohexamers on either side of HJ DNA bound by 1 or 2 RuvA tetramers; 4 subunits per hexamer contact DNA at a time. Coordinated motions by a converter formed by DNA-disengaged RuvB subunits stimulates ATP hydrolysis and nucleotide exchange. Immobilization of the converter enables RuvB to convert the ATP-contained energy into a lever motion, pulling 2 nucleotides of DNA out of the RuvA tetramer per ATP hydrolyzed, thus driving DNA branch migration. The RuvB motors rotate together with the DNA substrate, which together with the progressing nucleotide cycle form the mechanistic basis for DNA recombination by continuous HJ branch migration. Branch migration allows RuvC to scan DNA until it finds its consensus sequence, where it cleaves and resolves cruciform DNA. This Chlorobium phaeovibrioides (strain DSM 265 / 1930) (Prosthecochloris vibrioformis (strain DSM 265)) protein is Holliday junction branch migration complex subunit RuvB.